The sequence spans 213 residues: Small ribosomal subunit protein uS3c (213 aa).

One can recognise a KH type-2 domain in the interval 39–109 (IRKYLNAKLA…KFRITITYLQ (71 aa)).

The protein belongs to the universal ribosomal protein uS3 family. As to quaternary structure, part of the 30S ribosomal subunit.

The protein resides in the plastid. Its subcellular location is the chloroplast. In Mesostigma viride (Green alga), this protein is Small ribosomal subunit protein uS3c (rps3).